The sequence spans 140 residues: uncharacterized protein (140 aa).

It to B.subtilis YrhD.

This is an uncharacterized protein from Archaeoglobus fulgidus (strain ATCC 49558 / DSM 4304 / JCM 9628 / NBRC 100126 / VC-16).